A 345-amino-acid polypeptide reads, in one-letter code: uncharacterized protein (345 aa).

The protein belongs to the Gfo/Idh/MocA family. Biliverdin reductase subfamily.

This is an uncharacterized protein from Escherichia coli (strain K12).